The following is a 243-amino-acid chain: Juxtaposed with another zinc finger protein 1 (243 aa).

The segment at 12-37 adopts a C2H2-type 1 zinc-finger fold; the sequence is NTCRFGGCGLHFPTLADLIEHIEDNH. Residues 39–79 are required for interaction with NR2C2; that stretch reads DTDPRVLEKQELQQPTYVALSYINRFMTDAARREQESLKKK. A compositionally biased stretch (polar residues) spans 89–108; the sequence is SSSVSRGNVSTPPRHSSGSL. The segment at 89–151 is disordered; it reads SSSVSRGNVS…SDSDESWTTE (63 aa). T109 and T113 each carry phosphothreonine. Residues 118–130 show a composition bias toward low complexity; that stretch reads PSSSFRSSTPTGS. The segment covering 131–148 has biased composition (acidic residues); that stretch reads EYDEEEVDYEESDSDESW. The C2H2-type 2 zinc finger occupies 173 to 198; that stretch reads FACPVPGCKKRYKNVNGIKYHAKNGH. The C2H2-type 3; degenerate zinc finger occupies 208 to 230; it reads FKCRCGKSYKTAQGLRHHTINFH.

As to quaternary structure, interacts with NR2C2 (via ligand-binding region). In terms of tissue distribution, highest expression in testis with moderate levels in colon, placenta, prostate and ovary and low levels in brain, spleen, liver and small intestine.

It is found in the nucleus. Functionally, acts as a transcriptional corepressor of orphan nuclear receptor NR2C2. Inhibits expression of the gluconeogenesis enzyme PCK2 through inhibition of NR2C2 activity. Also involved in transcriptional activation of NAMPT by promoting expression of PPARA and PPARD. Plays a role in lipid metabolism by suppressing lipogenesis, increasing lipolysis and decreasing lipid accumulation in adipose tissue. Plays a role in glucose homeostasis by improving glucose metabolism and insulin sensitivity. The sequence is that of Juxtaposed with another zinc finger protein 1 from Homo sapiens (Human).